The sequence spans 184 residues: Endoribonuclease YbeY (184 aa).

2 stretches are compositionally biased toward acidic residues: residues 1–11 (MTVEVGADENP) and 19–29 (DGAGDESDDED). A disordered region spans residues 1-37 (MTVEVGADENPDFAHDETDGAGDESDDEDAQGRDPEL). Residues histidine 146, histidine 150, and histidine 156 each contribute to the Zn(2+) site.

This sequence belongs to the endoribonuclease YbeY family. The cofactor is Zn(2+).

The protein resides in the cytoplasm. In terms of biological role, single strand-specific metallo-endoribonuclease involved in late-stage 70S ribosome quality control and in maturation of the 3' terminus of the 16S rRNA. This is Endoribonuclease YbeY from Burkholderia mallei (strain ATCC 23344).